Reading from the N-terminus, the 493-residue chain is MSNRQIKSDVILIGAGIMSATLGTILKELAPDWKITVFEKLEKAGEESSHELNNAGTGHAALCELNYTSEKKDGSIDIKKAINVNEQFQVSRQFWSYLVNNKLINNPQDFIMPLPHMSLVQGKENVEFLKKRHETMIQNPLFEGMEFSNDPETLKKWIPLIMENRPAGEDIAATKIDTGTDVNFGALTRMLIDHLKAKDVDVNYNHSVESLKQASDGSWEVRVHDLDGCKMEYHSAKFVFLGAGGGSLELLQKSGIPEGKHIGGFPISGLFLACNNPEVAEQHHAKVYGKAKVGAPPMSVPHLDTRYIDNKKSLLFGPFAGFSPKFLKTGSNMDLFASVKPHNITTLLAAGVKEMGLTKYLIQQLMLSKEQRMEELREFIPNAKSDDWDIIVAGQRVQVIKDTEAGGKGTLQFGTEVVSAADGSIAALLGASPGASTAVHVMLEVINKCFPQHIKEWEAKIKEMIPSYGLSLAENPELLKEINATTDEALRLK.

This sequence belongs to the MQO family. Requires FAD as cofactor.

It carries out the reaction (S)-malate + a quinone = a quinol + oxaloacetate. It participates in carbohydrate metabolism; tricarboxylic acid cycle; oxaloacetate from (S)-malate (quinone route): step 1/1. This Lysinibacillus sphaericus (strain C3-41) protein is Probable malate:quinone oxidoreductase.